The sequence spans 749 residues: Cytosolic phospholipase A2 (749 aa).

Residues 1–178 (MSFIDPYQHI…MKKLLGPKNS (178 aa)) are phospholipid binding. Phosphoserine is present on Ser-2. One can recognise a C2 domain in the interval 6–122 (PYQHIIVEHQ…KVGEKKEVPF (117 aa)). Ca(2+) contacts are provided by Asp-40, Thr-41, Asp-43, Asn-65, Asp-93, Ala-94, and Asn-95. The region spanning 140-740 (SCPDLRFSMA…SNVEARRFFN (601 aa)) is the PLA2c domain. The active-site Nucleophile is Ser-228. At Thr-268 the chain carries Phosphothreonine. A disordered region spans residues 409–457 (GSQSRGSTMEEELENITTKHIVSNDSSDSDDESHEPKGTENEDAGSDYQ). Phosphoserine occurs at positions 434, 435, and 437. Ser-505 is subject to Phosphoserine; by MAPK. A Phosphoserine modification is found at Ser-515. Residue Lys-541 forms a Glycyl lysine isopeptide (Lys-Gly) (interchain with G-Cter in SUMO2) linkage. Asp-549 acts as the Proton acceptor in catalysis. Residue Lys-606 forms a Glycyl lysine isopeptide (Lys-Gly) (interchain with G-Cter in SUMO2) linkage. Residues Ser-727 and Ser-729 each carry the phosphoserine modification.

In terms of assembly, interacts with KAT5. Post-translationally, phosphorylated at both Ser-505 and Ser-727 in response to mitogenic stimuli. In terms of tissue distribution, expressed in various cells and tissues such as macrophages, neutrophils, fibroblasts and lung endothelium. Expressed in platelets (at protein level).

It is found in the cytoplasm. The protein resides in the golgi apparatus membrane. It localises to the nucleus envelope. The enzyme catalyses a 1,2-diacyl-sn-glycero-3-phosphocholine + H2O = a 1-acyl-sn-glycero-3-phosphocholine + a fatty acid + H(+). It catalyses the reaction a 1-O-alkyl-2-acyl-sn-glycero-3-phosphocholine + H2O = a 1-O-alkyl-sn-glycero-3-phosphocholine + a fatty acid + H(+). It carries out the reaction a 1-acyl-sn-glycero-3-phosphocholine + H2O = sn-glycerol 3-phosphocholine + a fatty acid + H(+). The catalysed reaction is 1-hexadecanoyl-2-(5Z,8Z,11Z,14Z-eicosatetraenoyl)-sn-glycero-3-phosphocholine + H2O = 1-hexadecanoyl-sn-glycero-3-phosphocholine + (5Z,8Z,11Z,14Z)-eicosatetraenoate + H(+). The enzyme catalyses 1,2-di-(5Z,8Z,11Z,14Z-eicosatetraenoyl)-sn-glycero-3-phosphocholine + H2O = 1-(5Z,8Z,11Z,14Z-eicosatetraenoyl)-sn-glycero-3-phosphocholine + (5Z,8Z,11Z,14Z)-eicosatetraenoate + H(+). It catalyses the reaction 1-octadecanoyl-2-(5Z,8Z,11Z,14Z-eicosatetraenoyl)-sn-glycero-3-phosphocholine + H2O = 1-octadecanoyl-sn-glycero-3-phosphocholine + (5Z,8Z,11Z,14Z)-eicosatetraenoate + H(+). It carries out the reaction 1-hexadecanoyl-2-(9Z,12Z-octadecadienoyl)-sn-glycero-3-phosphocholine + H2O = (9Z,12Z)-octadecadienoate + 1-hexadecanoyl-sn-glycero-3-phosphocholine + H(+). The catalysed reaction is 1-octadecanoyl-2-(9Z,12Z,15Z-octadecatrienoyl)-sn-glycero-3-phosphocholine + H2O = (9Z,12Z,15Z)-octadecatrienoate + 1-octadecanoyl-sn-glycero-3-phosphocholine + H(+). The enzyme catalyses 1-(5Z,8Z,11Z,14Z-eicosatetraenoyl)-2-hexadecanoyl-sn-glycero-3-phosphocholine + H2O = 1-(5Z,8Z,11Z,14Z-eicosatetraenoyl)-sn-glycero-3-phosphocholine + hexadecanoate + H(+). It catalyses the reaction 1-O-hexadecyl-2-(5Z,8Z,11Z,14Z)-eicosatetraenoyl-sn-glycero-3-phosphocholine + H2O = 1-O-hexadecyl-sn-glycero-3-phosphocholine + (5Z,8Z,11Z,14Z)-eicosatetraenoate + H(+). It carries out the reaction 1,2-di-(9Z-octadecenoyl)-sn-glycero-3-phospho-(1'-sn-glycerol) + H2O = 1-(9Z-octadecenoyl)-sn-glycero-3-phospho-(1'-sn-glycerol) + (9Z)-octadecenoate + H(+). The catalysed reaction is 1-octadecanoyl-2-(5Z,8Z,11Z,14Z-eicosatetraenoyl)-sn-glycero-3-phosphate + H2O = 1-octadecanoyl-sn-glycero-3-phosphate + (5Z,8Z,11Z,14Z)-eicosatetraenoate + H(+). The enzyme catalyses 1-hexadecanoyl-sn-glycero-3-phosphocholine + H2O = sn-glycerol 3-phosphocholine + hexadecanoate + H(+). It catalyses the reaction 2-(prostaglandin E2)-sn-glycero-3-phosphoethanolamine + H2O = sn-glycero-3-phosphoethanolamine + prostaglandin E2 + H(+). It carries out the reaction 2-[(15S)-hydroxy-(5Z,8Z,11Z,13E)-eicosatetraenoyl]-sn-glycero-3-phosphocholine + H2O = (15S)-hydroxy-(5Z,8Z,11Z,13E)-eicosatetraenoate + sn-glycerol 3-phosphocholine + H(+). The catalysed reaction is 2-[(15R)-hydroxy-(5Z,8Z,11Z,13E)-eicosatetraenoyl]-sn-glycero-3-phosphocholine + H2O = (15R)-hydroxy-(5Z,8Z,11Z,13E)-eicosatetraenoate + sn-glycerol 3-phosphocholine + H(+). The enzyme catalyses 2-(prostaglandin E2)-sn-glycero-3-phosphocholine + H2O = prostaglandin E2 + sn-glycerol 3-phosphocholine + H(+). It catalyses the reaction 2-[(11R)-hydroxy-(5Z,8Z,12E,14Z)-eicosatetraenoyl]-sn-glycero-3-phosphocholine + H2O = (11R)-hydroxy-(5Z,8Z,12E,14Z)-eicosatetraenoate + sn-glycerol 3-phosphocholine + H(+). It carries out the reaction 1-(5Z,8Z,11Z,14Z-eicosatetraenoyl)-2-O-hexadecyl-sn-glycero-3-phosphocholine + H2O = 2-O-hexadecyl-sn-glycero-3-phosphocholine + (5Z,8Z,11Z,14Z)-eicosatetraenoate + H(+). The catalysed reaction is 1-octadecanoyl-2-(5Z,8Z,11Z,14Z-eicosatetraenoyl)-sn-glycero-3-phosphocholine + glycerol = 1-(5Z,8Z,11Z,14Z-eicosatetraenoyl)-glycerol + 1-octadecanoyl-sn-glycero-3-phosphocholine. The enzyme catalyses 1-octadecanoyl-2-(9Z,12Z,15Z-octadecatrienoyl)-sn-glycero-3-phosphocholine + glycerol = 1-(9Z,12Z,15Z-octadecatrienoyl)-glycerol + 1-octadecanoyl-sn-glycero-3-phosphocholine. It participates in membrane lipid metabolism; glycerophospholipid metabolism. It functions in the pathway lipid metabolism; arachidonate metabolism. The protein operates within lipid metabolism; prostaglandin biosynthesis. Its pathway is lipid metabolism; leukotriene B4 biosynthesis. Its activity is regulated as follows. Activated by cytosolic calcium, which is necessary for binding to membrane lipids. Activated by phosphorylation in response to mitogenic stimuli. Activated by ceramide-1-phosphate. Binding (via C2 domain) to ceramide-1-phosphate increases the affinity for membrane lipids. Can be activated by phosphoinositides in the absence of calcium. Inhibited by ANXA5 in a calcium- and substrate-dependent way. Has primarily calcium-dependent phospholipase and lysophospholipase activities, with a major role in membrane lipid remodeling and biosynthesis of lipid mediators of the inflammatory response. Plays an important role in embryo implantation and parturition through its ability to trigger prostanoid production. Preferentially hydrolyzes the ester bond of the fatty acyl group attached at sn-2 position of phospholipids (phospholipase A2 activity). Selectively hydrolyzes sn-2 arachidonoyl group from membrane phospholipids, providing the precursor for eicosanoid biosynthesis via the cyclooxygenase pathway. In an alternative pathway of eicosanoid biosynthesis, hydrolyzes sn-2 fatty acyl chain of eicosanoid lysophopholipids to release free bioactive eicosanoids. Hydrolyzes the ester bond of the fatty acyl group attached at sn-1 position of phospholipids (phospholipase A1 activity) only if an ether linkage rather than an ester linkage is present at the sn-2 position. This hydrolysis is not stereospecific. Has calcium-independent phospholipase A2 and lysophospholipase activities in the presence of phosphoinositides. Has O-acyltransferase activity. Catalyzes the transfer of fatty acyl chains from phospholipids to a primary hydroxyl group of glycerol (sn-1 or sn-3), potentially contributing to monoacylglycerol synthesis. The sequence is that of Cytosolic phospholipase A2 (PLA2G4A) from Homo sapiens (Human).